Consider the following 341-residue polypeptide: S-adenosylmethionine:tRNA ribosyltransferase-isomerase (341 aa).

Belongs to the QueA family. As to quaternary structure, monomer.

Its subcellular location is the cytoplasm. It catalyses the reaction 7-aminomethyl-7-carbaguanosine(34) in tRNA + S-adenosyl-L-methionine = epoxyqueuosine(34) in tRNA + adenine + L-methionine + 2 H(+). Its pathway is tRNA modification; tRNA-queuosine biosynthesis. Transfers and isomerizes the ribose moiety from AdoMet to the 7-aminomethyl group of 7-deazaguanine (preQ1-tRNA) to give epoxyqueuosine (oQ-tRNA). In Clostridium botulinum (strain Okra / Type B1), this protein is S-adenosylmethionine:tRNA ribosyltransferase-isomerase.